Reading from the N-terminus, the 865-residue chain is Protein translocase subunit SecA (865 aa).

ATP-binding positions include Q93, 111–115 (GEGKT), and D501. 4 residues coordinate Zn(2+): C841, C843, C852, and C853.

This sequence belongs to the SecA family. As to quaternary structure, monomer and homodimer. Part of the essential Sec protein translocation apparatus which comprises SecA, SecYEG and auxiliary proteins SecDF-YajC and YidC. Zn(2+) is required as a cofactor.

It is found in the cell inner membrane. The protein resides in the cytoplasm. It carries out the reaction ATP + H2O + cellular proteinSide 1 = ADP + phosphate + cellular proteinSide 2.. In terms of biological role, part of the Sec protein translocase complex. Interacts with the SecYEG preprotein conducting channel. Has a central role in coupling the hydrolysis of ATP to the transfer of proteins into and across the cell membrane, serving as an ATP-driven molecular motor driving the stepwise translocation of polypeptide chains across the membrane. In Helicobacter pylori (strain HPAG1), this protein is Protein translocase subunit SecA.